Consider the following 337-residue polypeptide: Fructose-1,6-bisphosphatase class 1 (337 aa).

Mg(2+) contacts are provided by glutamate 89, aspartate 112, leucine 114, and aspartate 115. Substrate contacts are provided by residues aspartate 115–serine 118, asparagine 208, tyrosine 241, and lysine 271. Glutamate 277 is a binding site for Mg(2+).

The protein belongs to the FBPase class 1 family. As to quaternary structure, homotetramer. Requires Mg(2+) as cofactor.

It localises to the cytoplasm. The enzyme catalyses beta-D-fructose 1,6-bisphosphate + H2O = beta-D-fructose 6-phosphate + phosphate. Its pathway is carbohydrate biosynthesis; gluconeogenesis. This is Fructose-1,6-bisphosphatase class 1 from Psychromonas ingrahamii (strain DSM 17664 / CCUG 51855 / 37).